A 446-amino-acid polypeptide reads, in one-letter code: Phosphoglucosamine mutase (446 aa).

The active-site Phosphoserine intermediate is S103. S103, D242, D244, and D246 together coordinate Mg(2+). At S103 the chain carries Phosphoserine.

Belongs to the phosphohexose mutase family. Mg(2+) serves as cofactor. Activated by phosphorylation.

It catalyses the reaction alpha-D-glucosamine 1-phosphate = D-glucosamine 6-phosphate. Its function is as follows. Catalyzes the conversion of glucosamine-6-phosphate to glucosamine-1-phosphate. This Corynebacterium urealyticum (strain ATCC 43042 / DSM 7109) protein is Phosphoglucosamine mutase.